Consider the following 143-residue polypeptide: Transcriptional regulatory protein RosR (143 aa).

The C2H3-type zinc finger occupies 79–97 (CLECGGNFKSLKRHLMTHH).

This sequence belongs to the ros/MucR family.

The chain is Transcriptional regulatory protein RosR (rosR) from Rhizobium etli (strain ATCC 51251 / DSM 11541 / JCM 21823 / NBRC 15573 / CFN 42).